The sequence spans 514 residues: UDP-N-acetylmuramyl-tripeptide synthetase (514 aa).

2 residues coordinate UDP-N-acetyl-alpha-D-muramoyl-L-alanyl-D-glutamate: Leu44 and Ser46. ATP is bound at residue 129-135 (GTNGKTS). Residues 171 to 172 (TT), Ser198, and Arg206 each bind UDP-N-acetyl-alpha-D-muramoyl-L-alanyl-D-glutamate. Lys238 carries the N6-carboxylysine modification.

This sequence belongs to the MurCDEF family. MurE subfamily. In terms of processing, carboxylation is probably crucial for Mg(2+) binding and, consequently, for the gamma-phosphate positioning of ATP.

Its subcellular location is the cytoplasm. Its pathway is cell wall biogenesis; peptidoglycan biosynthesis. Functionally, catalyzes the addition of an amino acid to the nucleotide precursor UDP-N-acetylmuramoyl-L-alanyl-D-glutamate (UMAG) in the biosynthesis of bacterial cell-wall peptidoglycan. This chain is UDP-N-acetylmuramyl-tripeptide synthetase, found in Leifsonia xyli subsp. xyli (strain CTCB07).